Consider the following 267-residue polypeptide: Glucosamine-6-phosphate deaminase (267 aa).

Residue D72 is the Proton acceptor; for enolization step of the active site. D141 functions as the For ring-opening step in the catalytic mechanism. H143 acts as the Proton acceptor; for ring-opening step in catalysis. The active-site For ring-opening step is the E148.

This sequence belongs to the glucosamine/galactosamine-6-phosphate isomerase family. NagB subfamily. In terms of assembly, homohexamer.

The enzyme catalyses alpha-D-glucosamine 6-phosphate + H2O = beta-D-fructose 6-phosphate + NH4(+). Its pathway is amino-sugar metabolism; N-acetylneuraminate degradation; D-fructose 6-phosphate from N-acetylneuraminate: step 5/5. With respect to regulation, allosterically activated by N-acetylglucosamine 6-phosphate (GlcNAc6P). Its function is as follows. Catalyzes the reversible isomerization-deamination of glucosamine 6-phosphate (GlcN6P) to form fructose 6-phosphate (Fru6P) and ammonium ion. The protein is Glucosamine-6-phosphate deaminase of Haemophilus ducreyi (strain 35000HP / ATCC 700724).